Consider the following 150-residue polypeptide: Transcriptional regulator MraZ (150 aa).

2 consecutive SpoVT-AbrB domains span residues 11–53 (TYTP…PFDE) and 82–125 (AVDQ…NKDT).

Belongs to the MraZ family. As to quaternary structure, forms oligomers.

The protein localises to the cytoplasm. Its subcellular location is the nucleoid. This is Transcriptional regulator MraZ from Bifidobacterium longum (strain NCC 2705).